Reading from the N-terminus, the 699-residue chain is Elongation factor G (699 aa).

The tr-type G domain occupies 8–288 (EDYRNFGIMA…AVCEYLPSPL (281 aa)). Residues 17–24 (AHIDAGKT), 86–90 (DTPGH), and 140–143 (NKMD) contribute to the GTP site.

It belongs to the TRAFAC class translation factor GTPase superfamily. Classic translation factor GTPase family. EF-G/EF-2 subfamily.

It is found in the cytoplasm. Functionally, catalyzes the GTP-dependent ribosomal translocation step during translation elongation. During this step, the ribosome changes from the pre-translocational (PRE) to the post-translocational (POST) state as the newly formed A-site-bound peptidyl-tRNA and P-site-bound deacylated tRNA move to the P and E sites, respectively. Catalyzes the coordinated movement of the two tRNA molecules, the mRNA and conformational changes in the ribosome. The sequence is that of Elongation factor G from Allorhizobium ampelinum (strain ATCC BAA-846 / DSM 112012 / S4) (Agrobacterium vitis (strain S4)).